The primary structure comprises 516 residues: MQEVPIVILDFGSQYTQLIARRLREVGVYCEIYPFFEPIENIRAKKPQGIILSGGPASVYEPDAPRVDKAIYELGIPVLGICYGMQLITVDFGGQVVRALEHEYGKAKLYFDPIHGKVCPLFEGTKDGQIVWMSHGDKVTELPAGFIRIAHTDNSPYAAIANEEKQIYALQFHPEVSHSQEGQKILENFARKICGITSKWDMGHFAKEQIEKIRQRVGEDKVLCALSGGVDSSVVTALLYEAIGDKLIPVFVDNGLLREGEREKVEYVFKNMLKVPLIVVDAKERFLNALQGITDPEQKRKIIGHTFIEVFEEEAKKHTDVKYLAQGTLYPDVIESVSVKGPSETIKSHHNVGGLPDWMKFELIEPLRELFKDEVRKLGLELGLPREMVYRHPFPGPGLAIRILGEVNEEALDLVRKADTILLEEIKAHGLYEKLWQSFAVLLNVKSVGVMGDKRTYENTVALRIVESSDGMTATFAHIPHDLLELISNRIINEVDGINRVVYDITSKPPGTIEWE.

One can recognise a Glutamine amidotransferase type-1 domain in the interval 5–199 (PIVILDFGSQ…ARKICGITSK (195 aa)). The active-site Nucleophile is cysteine 82. Active-site residues include histidine 173 and glutamate 175. The region spanning 200 to 391 (WDMGHFAKEQ…LGLPREMVYR (192 aa)) is the GMPS ATP-PPase domain. An ATP-binding site is contributed by 227–233 (SGGVDSS).

As to quaternary structure, homodimer.

The enzyme catalyses XMP + L-glutamine + ATP + H2O = GMP + L-glutamate + AMP + diphosphate + 2 H(+). The protein operates within purine metabolism; GMP biosynthesis; GMP from XMP (L-Gln route): step 1/1. Functionally, catalyzes the synthesis of GMP from XMP. The polypeptide is GMP synthase [glutamine-hydrolyzing] (Nitratiruptor sp. (strain SB155-2)).